The primary structure comprises 514 residues: Na(+)/H(+) antiporter NhaB (514 aa).

Helical transmembrane passes span 13–33 (FMGN…IINP), 34–54 (LIFF…EFIF), 96–116 (VILL…LLLF), 136–156 (CFAS…AVVI), 203–223 (LMMH…VGEP), 236–256 (FVTF…AGLA), 304–324 (ALIG…VGII), 349–369 (EEAL…AVII), 392–412 (LFYL…VGTV), 448–468 (ATPN…SPLI), and 479–499 (ALPY…FWLV).

This sequence belongs to the NhaB Na(+)/H(+) (TC 2.A.34) antiporter family.

The protein resides in the cell inner membrane. The catalysed reaction is 2 Na(+)(in) + 3 H(+)(out) = 2 Na(+)(out) + 3 H(+)(in). Na(+)/H(+) antiporter that extrudes sodium in exchange for external protons. This is Na(+)/H(+) antiporter NhaB from Proteus mirabilis (strain HI4320).